The sequence spans 286 residues: ATP synthase gamma chain (286 aa).

Belongs to the ATPase gamma chain family. As to quaternary structure, F-type ATPases have 2 components, CF(1) - the catalytic core - and CF(0) - the membrane proton channel. CF(1) has five subunits: alpha(3), beta(3), gamma(1), delta(1), epsilon(1). CF(0) has three main subunits: a, b and c.

It localises to the cell inner membrane. Its function is as follows. Produces ATP from ADP in the presence of a proton gradient across the membrane. The gamma chain is believed to be important in regulating ATPase activity and the flow of protons through the CF(0) complex. The sequence is that of ATP synthase gamma chain from Leptospira borgpetersenii serovar Hardjo-bovis (strain JB197).